A 370-amino-acid polypeptide reads, in one-letter code: 3-isopropylmalate dehydrogenase (370 aa).

NAD(+) is bound at residue 77-90 (GPKWDAVPYDARPE). Positions 97, 107, 135, and 226 each coordinate substrate. Mg(2+) is bound by residues Asp-226, Asp-250, and Asp-254. Position 290–302 (290–302 (GSAPDIAGKGLAN)) interacts with NAD(+).

It belongs to the isocitrate and isopropylmalate dehydrogenases family. LeuB type 1 subfamily. Homodimer. Mg(2+) is required as a cofactor. It depends on Mn(2+) as a cofactor.

It is found in the cytoplasm. It catalyses the reaction (2R,3S)-3-isopropylmalate + NAD(+) = 4-methyl-2-oxopentanoate + CO2 + NADH. It participates in amino-acid biosynthesis; L-leucine biosynthesis; L-leucine from 3-methyl-2-oxobutanoate: step 3/4. Catalyzes the oxidation of 3-carboxy-2-hydroxy-4-methylpentanoate (3-isopropylmalate) to 3-carboxy-4-methyl-2-oxopentanoate. The product decarboxylates to 4-methyl-2 oxopentanoate. The polypeptide is 3-isopropylmalate dehydrogenase (Rhodopseudomonas palustris (strain HaA2)).